The chain runs to 444 residues: Xaa-Pro dipeptidase (444 aa).

Mn(2+)-binding residues include Asp247, Asp258, His340, Glu385, and Glu424.

This sequence belongs to the peptidase M24B family. Bacterial-type prolidase subfamily. Mn(2+) serves as cofactor.

It catalyses the reaction Xaa-L-Pro dipeptide + H2O = an L-alpha-amino acid + L-proline. Splits dipeptides with a prolyl residue in the C-terminal position. This is Xaa-Pro dipeptidase from Proteus mirabilis (strain HI4320).